A 248-amino-acid polypeptide reads, in one-letter code: Methyl-coenzyme M reductase subunit gamma (248 aa).

Arginine 121 contacts coenzyme M.

This sequence belongs to the methyl-coenzyme M reductase gamma subunit family. As to quaternary structure, MCR is a hexamer of two alpha, two beta, and two gamma chains, forming a dimer of heterotrimers. Coenzyme F430 serves as cofactor.

The protein localises to the cytoplasm. It catalyses the reaction coenzyme B + methyl-coenzyme M = methane + coenzyme M-coenzyme B heterodisulfide. Its pathway is one-carbon metabolism; methyl-coenzyme M reduction; methane from methyl-coenzyme M: step 1/1. Its function is as follows. Component of the methyl-coenzyme M reductase (MCR) I that catalyzes the reductive cleavage of methyl-coenzyme M (CoM-S-CH3 or 2-(methylthio)ethanesulfonate) using coenzyme B (CoB or 7-mercaptoheptanoylthreonine phosphate) as reductant which results in the production of methane and the mixed heterodisulfide of CoB and CoM (CoM-S-S-CoB). This is the final step in methanogenesis. This chain is Methyl-coenzyme M reductase subunit gamma (mcrG), found in Methanosarcina barkeri (strain Fusaro / DSM 804).